We begin with the raw amino-acid sequence, 122 residues long: MMGVVSLPRVIGKQVYGSLYECDTTVLGEQKVLEQIVRKAAEEGNMTLLDVKAWKIGDGVSIVAIVLESHITIHTWPEYNFATVDVYSCGSHTDPRKAFLYIVKELKARRYTMNEADRSSEF.

The active-site Schiff-base intermediate with substrate; via pyruvic acid is the Ser-69. Pyruvic acid (Ser); by autocatalysis is present on Ser-69. The Proton acceptor; for processing activity role is filled by His-74. Cys-89 acts as the Proton donor; for catalytic activity in catalysis.

The protein belongs to the prokaryotic AdoMetDC family. Type 1 subfamily. In terms of assembly, heterotetramer of two alpha and two beta chains arranged as a dimer of alpha/beta heterodimers. Pyruvate serves as cofactor. In terms of processing, is synthesized initially as an inactive proenzyme. Formation of the active enzyme involves a self-maturation process in which the active site pyruvoyl group is generated from an internal serine residue via an autocatalytic post-translational modification. Two non-identical subunits are generated from the proenzyme in this reaction, and the pyruvate is formed at the N-terminus of the alpha chain, which is derived from the carboxyl end of the proenzyme. The post-translation cleavage follows an unusual pathway, termed non-hydrolytic serinolysis, in which the side chain hydroxyl group of the serine supplies its oxygen atom to form the C-terminus of the beta chain, while the remainder of the serine residue undergoes an oxidative deamination to produce ammonia and the pyruvoyl group blocking the N-terminus of the alpha chain.

It carries out the reaction S-adenosyl-L-methionine + H(+) = S-adenosyl 3-(methylsulfanyl)propylamine + CO2. The protein operates within amine and polyamine biosynthesis; S-adenosylmethioninamine biosynthesis; S-adenosylmethioninamine from S-adenosyl-L-methionine: step 1/1. Its function is as follows. Catalyzes the decarboxylation of S-adenosylmethionine to S-adenosylmethioninamine (dcAdoMet), the propylamine donor required for the synthesis of the polyamines spermine and spermidine from the diamine putrescine. This Sulfolobus acidocaldarius (strain ATCC 33909 / DSM 639 / JCM 8929 / NBRC 15157 / NCIMB 11770) protein is S-adenosylmethionine decarboxylase proenzyme.